Here is a 492-residue protein sequence, read N- to C-terminus: 3-octaprenyl-4-hydroxybenzoate carboxy-lyase (492 aa).

Asn177 contacts Mn(2+). Prenylated FMN is bound by residues 180–182 (IYR), 194–196 (RWL), and 199–200 (RG). Glu243 serves as a coordination point for Mn(2+). Residue Asp292 is the Proton donor of the active site.

The protein belongs to the UbiD family. As to quaternary structure, homohexamer. The cofactor is prenylated FMN. It depends on Mn(2+) as a cofactor.

It is found in the cell membrane. The catalysed reaction is a 4-hydroxy-3-(all-trans-polyprenyl)benzoate + H(+) = a 2-(all-trans-polyprenyl)phenol + CO2. The protein operates within cofactor biosynthesis; ubiquinone biosynthesis. Its function is as follows. Catalyzes the decarboxylation of 3-octaprenyl-4-hydroxy benzoate to 2-octaprenylphenol, an intermediate step in ubiquinone biosynthesis. The chain is 3-octaprenyl-4-hydroxybenzoate carboxy-lyase from Neisseria meningitidis serogroup C / serotype 2a (strain ATCC 700532 / DSM 15464 / FAM18).